The sequence spans 604 residues: Glutamine--fructose-6-phosphate aminotransferase [isomerizing] (604 aa).

Cys2 acts as the Nucleophile; for GATase activity in catalysis. Residues 2 to 216 (CGIVGYVGFR…DGDVVRLTRE (215 aa)) enclose the Glutamine amidotransferase type-2 domain. SIS domains are found at residues 281–420 (LALD…ARGA) and 453–594 (VAEK…VDQP). Lys599 functions as the For Fru-6P isomerization activity in the catalytic mechanism.

Homodimer.

The protein resides in the cytoplasm. The catalysed reaction is D-fructose 6-phosphate + L-glutamine = D-glucosamine 6-phosphate + L-glutamate. Functionally, catalyzes the first step in hexosamine metabolism, converting fructose-6P into glucosamine-6P using glutamine as a nitrogen source. This chain is Glutamine--fructose-6-phosphate aminotransferase [isomerizing], found in Thermus thermophilus (strain ATCC BAA-163 / DSM 7039 / HB27).